The chain runs to 314 residues: Malate dehydrogenase (314 aa).

NAD(+)-binding positions include 12 to 17 (GAGFTG) and aspartate 36. Residues arginine 87 and arginine 93 each contribute to the substrate site. Residues asparagine 100 and 123-125 (LTN) contribute to the NAD(+) site. Asparagine 125 contacts substrate. Position 149 is a phosphoserine (serine 149). Arginine 156 provides a ligand contact to substrate. Histidine 180 (proton acceptor) is an active-site residue.

This sequence belongs to the LDH/MDH superfamily. MDH type 3 family.

The enzyme catalyses (S)-malate + NAD(+) = oxaloacetate + NADH + H(+). In terms of biological role, catalyzes the reversible oxidation of malate to oxaloacetate. This Halalkalibacterium halodurans (strain ATCC BAA-125 / DSM 18197 / FERM 7344 / JCM 9153 / C-125) (Bacillus halodurans) protein is Malate dehydrogenase.